Consider the following 304-residue polypeptide: Protein PagO (304 aa).

10 helical membrane passes run 4-24 (VSIS…WLAM), 34-54 (VFAT…IAWL), 67-87 (LFQF…MIYG), 95-115 (LAAI…VLFL), 119-139 (AKLM…GILL), 150-170 (WQGI…YTQC), 180-200 (ITFN…TGWF), 214-234 (ILAT…CYFA), 246-266 (LVFL…YGYA), and 267-287 (ISTH…LTLV). 2 consecutive EamA domains span residues 15-139 (LTWG…GILL) and 161-287 (LIHA…LTLV).

This sequence belongs to the EamA transporter family.

It is found in the cell membrane. This Salmonella typhimurium (strain LT2 / SGSC1412 / ATCC 700720) protein is Protein PagO (pagO).